Reading from the N-terminus, the 1537-residue chain is Isocyanide synthase-NRPS hybrid crmA (1537 aa).

The interval Met-1–Phe-502 is isocyanide synthase domain. The interval Pro-351–Thr-391 is disordered. Residues Ser-352–Thr-381 show a composition bias toward low complexity. Polar residues predominate over residues Pro-382–Thr-391. The segment at Glu-573–Trp-752 is adenylation. The Carrier domain maps to Ser-941–Ala-1019. Residue Ser-977 is modified to O-(pantetheine 4'-phosphoryl)serine. Residues Arg-1293 to Phe-1526 form a transferase region.

In the N-terminal section; belongs to the isocyanide synthase family. This sequence in the C-terminal section; belongs to the NRP synthetase family.

The protein operates within secondary metabolite biosynthesis. Isocyanide synthase-NRPS hybrid; part of the crm gene cluster that mediates the biosynthesis of a yet unidentified copper-responsive metabolite. Converts valine into valine isocyanide that then contributes to two distinct biosynthetic pathways under copper-limiting conditions. Reaction of valine isocyanide with the imine intermediate of festuclavine results in formation of the amide bond in fumivaline A. In addition, valine isocyanide contributes to biosynthesis of a family of acylated sugar alcohols, the D-mannitol-derived fumicicolins. CrmA and associated products inhibit microbial growth from copper-starved A.fumigatus. The protein is Isocyanide synthase-NRPS hybrid crmA of Aspergillus fumigatus (strain ATCC MYA-4609 / CBS 101355 / FGSC A1100 / Af293) (Neosartorya fumigata).